A 360-amino-acid chain; its full sequence is Ferredoxin--NADP reductase 1 (360 aa).

7 residues coordinate FAD: Asp-43, Gln-51, Tyr-56, Ala-96, Phe-141, Asp-307, and Ser-348.

It belongs to the ferredoxin--NADP reductase type 2 family. Homodimer. Requires FAD as cofactor.

The catalysed reaction is 2 reduced [2Fe-2S]-[ferredoxin] + NADP(+) + H(+) = 2 oxidized [2Fe-2S]-[ferredoxin] + NADPH. This is Ferredoxin--NADP reductase 1 from Cupriavidus taiwanensis (strain DSM 17343 / BCRC 17206 / CCUG 44338 / CIP 107171 / LMG 19424 / R1) (Ralstonia taiwanensis (strain LMG 19424)).